The sequence spans 197 residues: Inner membrane-spanning protein YciB (197 aa).

Transmembrane regions (helical) follow at residues 36 to 56 (IYSA…ALFL), 64 to 84 (GQWL…TFHS), 90 to 110 (WKAP…HFIG), 135 to 155 (LAWI…AFTF), and 162 to 182 (FKVF…GVYL).

This sequence belongs to the YciB family.

It is found in the cell inner membrane. Plays a role in cell envelope biogenesis, maintenance of cell envelope integrity and membrane homeostasis. The chain is Inner membrane-spanning protein YciB from Pseudomonas putida (strain ATCC 700007 / DSM 6899 / JCM 31910 / BCRC 17059 / LMG 24140 / F1).